A 232-amino-acid chain; its full sequence is Phosphatidylserine decarboxylase proenzyme (232 aa).

The Schiff-base intermediate with substrate; via pyruvic acid role is filled by S190. Pyruvic acid (Ser); by autocatalysis is present on S190.

Belongs to the phosphatidylserine decarboxylase family. PSD-A subfamily. In terms of assembly, heterodimer of a large membrane-associated beta subunit and a small pyruvoyl-containing alpha subunit. Pyruvate serves as cofactor. Is synthesized initially as an inactive proenzyme. Formation of the active enzyme involves a self-maturation process in which the active site pyruvoyl group is generated from an internal serine residue via an autocatalytic post-translational modification. Two non-identical subunits are generated from the proenzyme in this reaction, and the pyruvate is formed at the N-terminus of the alpha chain, which is derived from the carboxyl end of the proenzyme. The post-translation cleavage follows an unusual pathway, termed non-hydrolytic serinolysis, in which the side chain hydroxyl group of the serine supplies its oxygen atom to form the C-terminus of the beta chain, while the remainder of the serine residue undergoes an oxidative deamination to produce ammonia and the pyruvoyl prosthetic group on the alpha chain.

It is found in the cell membrane. It carries out the reaction a 1,2-diacyl-sn-glycero-3-phospho-L-serine + H(+) = a 1,2-diacyl-sn-glycero-3-phosphoethanolamine + CO2. The protein operates within phospholipid metabolism; phosphatidylethanolamine biosynthesis; phosphatidylethanolamine from CDP-diacylglycerol: step 2/2. Functionally, catalyzes the formation of phosphatidylethanolamine (PtdEtn) from phosphatidylserine (PtdSer). The protein is Phosphatidylserine decarboxylase proenzyme of Bradyrhizobium sp. (strain BTAi1 / ATCC BAA-1182).